The following is a 975-amino-acid chain: Protein HIRA (975 aa).

WD repeat units follow at residues 10–50 (RHEG…KDND), 64–103 (DHFG…GTSE), 123–162 (GHTA…CTAV), 165–204 (GHSS…LAHR), 214–256 (GSTF…ATFD), 259–331 (GHNA…PLFV), and 335–374 (FFTQ…LGYR). Residues 418–433 (KKVSSVQQFQSPPKVS) show a composition bias toward low complexity. Disordered stretches follow at residues 418 to 510 (KKVS…RSQN) and 948 to 975 (NVEQ…NGAS). A compositionally biased stretch (polar residues) spans 435-445 (DAPNPSTSVPN). The segment covering 478–492 (KQREYRRPDGRKRII) has biased composition (basic and acidic residues). Residues 499–510 (PSNQDMSNRSQN) are compositionally biased toward polar residues. The stretch at 923–954 (ATNRKVQRLLNEFMDLLSEYEAAETNVEQMDV) forms a coiled coil.

This sequence belongs to the WD repeat HIR1 family.

It localises to the nucleus. In terms of biological role, histone chaperone involved in maintining knox genes silencing throughout leaf development. In Oryza sativa subsp. japonica (Rice), this protein is Protein HIRA.